A 181-amino-acid chain; its full sequence is D-lyxose/D-mannose isomerase (181 aa).

The Mn(2+) site is built by histidine 75, histidine 77, glutamate 88, and histidine 143.

Belongs to the D-lyxose ketol-isomerase family. In terms of assembly, homodimer. Mn(2+) is required as a cofactor.

It catalyses the reaction D-lyxose = D-xylulose. It carries out the reaction D-mannose = D-fructose. Its function is as follows. Sugar isomerase that catalyzes the reversible isomerization of D-lyxose to D-xylulose, and D-mannose to D-fructose. Shows optimum activity using D-lyxose as substrate, but can also effectively catalyze the isomerization between D-fructose and D-mannose. The chain is D-lyxose/D-mannose isomerase from Thermosediminibacter oceani (strain ATCC BAA-1034 / DSM 16646 / JW/IW-1228P).